The chain runs to 803 residues: Bromodomain-containing protein 2 (803 aa).

The residue at position 1 (methionine 1) is an N-acetylmethionine. The segment at 1–28 (MLQNVTPHSKLPGEGNAGLLGLGPEAAA) is disordered. Position 6 is a phosphothreonine (threonine 6). Serine 37 carries the phosphoserine modification. A disordered region spans residues 53–73 (ALQLTPANPPPPEVSNPKKPG). The 107-residue stretch at 74–180 (RVTNQLQYLH…KIFLQKVASM (107 aa)) folds into the Bromo 1 domain. Aspartate 112, tyrosine 155, asparagine 156, lysine 157, aspartate 160, and aspartate 161 together coordinate a protein. 3 disordered regions span residues 268 to 349 (PPAQ…LSEQ), 456 to 653 (EPLE…RQLS), and 739 to 803 (EKRL…SDSG). The segment covering 285-298 (TTTPTPTAILAPGS) has biased composition (low complexity). Residues serine 298, serine 301, and serine 305 each carry the phosphoserine modification. Positions 316–332 (MRRESGRPIKPPRKDLP) are enriched in basic and acidic residues. Positions 344–453 (GKLSEQLKHC…DVFEFRYAKM (110 aa)) constitute a Bromo 2 domain. A compositionally biased stretch (acidic residues) spans 481–515 (SSEESSSESSSEEDEEEDEEEEEEEEESESSDSEE). Over residues 545-567 (KPKRKREKKEKKKKRKAEKHRGR) the composition is skewed to basic residues. The Nuclear localization signal signature appears at 556 to 560 (KKKRK). In terms of domain architecture, NET spans 634-716 (DSEEEEESRP…SCLRKKPRKP (83 aa)). Serine 635 is subject to Phosphoserine. The segment covering 641–652 (SRPMSYDEKRQL) has biased composition (basic and acidic residues). A compositionally biased stretch (low complexity) spans 777–797 (SASSSSSDSSSSSSSSSSSDT).

This sequence belongs to the BET family. Homodimer. Interacts with E2F1. Interacts with (acetylated) STAT3; promoting STAT3 recruitment to chromatin. Interacts with CTCF; promoting BRD2 recruitment to chromatin.

It is found in the nucleus. The protein localises to the chromosome. In terms of biological role, chromatin reader protein that specifically recognizes and binds histone H4 acetylated at 'Lys-5' and 'Lys-12' (H4K5ac and H4K12ac, respectively), thereby controlling gene expression and remodeling chromatin structures. Recruits transcription factors and coactivators to target gene sites, and activates RNA polymerase II machinery for transcriptional elongation. Plays a key role in genome compartmentalization via its association with CTCF and cohesin: recruited to chromatin by CTCF and promotes formation of topologically associating domains (TADs) via its ability to bind acetylated histones, contributing to CTCF boundary formation and enhancer insulation. Also recognizes and binds acetylated non-histone proteins, such as STAT3. Involved in inflammatory response by regulating differentiation of naive CD4(+) T-cells into T-helper Th17: recognizes and binds STAT3 acetylated at 'Lys-87', promoting STAT3 recruitment to chromatin. In addition to acetylated lysines, also recognizes and binds lysine residues on histones that are both methylated and acetylated on the same side chain to form N6-acetyl-N6-methyllysine (Kacme), an epigenetic mark of active chromatin associated with increased transcriptional initiation. Specifically binds histone H4 acetyl-methylated at 'Lys-5' and 'Lys-12' (H4K5acme and H4K12acme, respectively). This chain is Bromodomain-containing protein 2 (BRD2), found in Canis lupus familiaris (Dog).